The following is a 270-amino-acid chain: MLRKVFYISDGTAITAEVFGHAVLSQFPLEFDALTIPFVETEAKAEAVKAQINDCFITTGERPLVFHSIVKPEIRDVIYSSEGLDYDFLNTFVAPLEKQLGIAATPAMHRTHGKANEGYEARIDAINYAMENDDGQTMKHMDKADLILLGVSRCGKTPSSLYLSMQFGIKAANYPFTEDDMDNLKLPDALKRNKGKLFGLTIDPERLHEIRHSRMSNSRYSSLRQCRMEVKEVEMMYQKERIPFVNTTNHSVEEIATKILEITGLKRHMF.

150 to 157 (GVSRCGKT) contacts ADP.

The protein belongs to the pyruvate, phosphate/water dikinase regulatory protein family. PSRP subfamily.

The catalysed reaction is [pyruvate, water dikinase] + ADP = [pyruvate, water dikinase]-phosphate + AMP + H(+). It catalyses the reaction [pyruvate, water dikinase]-phosphate + phosphate + H(+) = [pyruvate, water dikinase] + diphosphate. Its function is as follows. Bifunctional serine/threonine kinase and phosphorylase involved in the regulation of the phosphoenolpyruvate synthase (PEPS) by catalyzing its phosphorylation/dephosphorylation. This Shewanella halifaxensis (strain HAW-EB4) protein is Putative phosphoenolpyruvate synthase regulatory protein.